We begin with the raw amino-acid sequence, 355 residues long: Phenylalanine--tRNA ligase alpha subunit (355 aa).

Position 273 (glutamate 273) interacts with Mg(2+).

This sequence belongs to the class-II aminoacyl-tRNA synthetase family. Phe-tRNA synthetase alpha subunit type 1 subfamily. In terms of assembly, tetramer of two alpha and two beta subunits. The cofactor is Mg(2+).

The protein localises to the cytoplasm. The catalysed reaction is tRNA(Phe) + L-phenylalanine + ATP = L-phenylalanyl-tRNA(Phe) + AMP + diphosphate + H(+). The chain is Phenylalanine--tRNA ligase alpha subunit from Bifidobacterium longum subsp. infantis (strain ATCC 15697 / DSM 20088 / JCM 1222 / NCTC 11817 / S12).